The primary structure comprises 158 residues: MPLTHLNEENQPKMVDIGDKETTERIALASGRISMNKEAYDAIINHGVKKGPVLQTAIIAGIMAAKKTSELIPMCHPIMLNGVDIDILEEKETCSFKLYARVKTQAKTGVEMEALMSVSIGLLTIYDMVKVIDKSMTISGVMLEHKSGGKSGDYNAKK.

Residues 74–76 (MCH) and 112–113 (ME) contribute to the substrate site. Residue Asp127 is part of the active site.

It belongs to the MoaC family. Homohexamer; trimer of dimers.

The enzyme catalyses (8S)-3',8-cyclo-7,8-dihydroguanosine 5'-triphosphate = cyclic pyranopterin phosphate + diphosphate. Its pathway is cofactor biosynthesis; molybdopterin biosynthesis. Functionally, catalyzes the conversion of (8S)-3',8-cyclo-7,8-dihydroguanosine 5'-triphosphate to cyclic pyranopterin monophosphate (cPMP). The sequence is that of Cyclic pyranopterin monophosphate synthase from Helicobacter pylori (strain J99 / ATCC 700824) (Campylobacter pylori J99).